We begin with the raw amino-acid sequence, 271 residues long: Co-chaperone protein DjlA (271 aa).

Residues 1-6 (MQYWGK) are Periplasmic-facing. Residues 7–31 (IIGVAVALIMGGGFWGVVLGLLIGH) form a helical membrane-spanning segment. The Cytoplasmic portion of the chain corresponds to 32–271 (MFDKARSRKM…ELIKQQKGFK (240 aa)). The region spanning 205 to 271 (DACNVLGVKP…ELIKQQKGFK (67 aa)) is the J domain.

As to quaternary structure, homodimer.

It is found in the cell inner membrane. Functionally, regulatory DnaK co-chaperone. Direct interaction between DnaK and DjlA is needed for the induction of the wcaABCDE operon, involved in the synthesis of a colanic acid polysaccharide capsule, possibly through activation of the RcsB/RcsC phosphotransfer signaling pathway. The colanic acid capsule may help the bacterium survive conditions outside the host. The chain is Co-chaperone protein DjlA from Escherichia coli O6:H1 (strain CFT073 / ATCC 700928 / UPEC).